Here is a 346-residue protein sequence, read N- to C-terminus: 3 beta-hydroxysteroid dehydrogenase/Delta 5--&gt;4-isomerase (346 aa).

Tyr-147 functions as the Proton acceptor in the catalytic mechanism. Position 151 (Lys-151) interacts with NAD(+).

This sequence belongs to the 3-beta-HSD family.

It catalyses the reaction a 3beta-hydroxy-Delta(5)-steroid + NAD(+) = a 3-oxo-Delta(5)-steroid + NADH + H(+). The enzyme catalyses a 3-oxo-Delta(5)-steroid = a 3-oxo-Delta(4)-steroid. Its pathway is lipid metabolism; steroid biosynthesis. Catalyzes the oxidative conversion of Delta(5)-ene-3-beta-hydroxy steroid, and the oxidative conversion of ketosteroids. The 3-beta-HSD enzymatic system plays a crucial role in the biosynthesis of all classes of hormonal steroids. During viral infection, steroid production contributes to virulence by inhibiting the host inflammatory response. This is 3 beta-hydroxysteroid dehydrogenase/Delta 5--&gt;4-isomerase (OPG174) from Monkeypox virus.